A 7071-amino-acid chain; its full sequence is Replicase polyprotein 1ab (7071 aa).

The region spanning 12–127 (THVQLSLPVL…YRNVLLRKNG (116 aa)) is the CoV Nsp1 globular domain. Residues 148-179 (ELGTDPIEDYEQNWNTKHGSGVLRELTRELNG) form the BetaCoV Nsp1 C-terminal domain. The 274-residue stretch at 183–456 (TRYVDNNFCG…NEDLLEILSR (274 aa)) folds into the CoV Nsp2 N-terminal domain. The Zn(2+) site is built by Cys200, Cys231, His234, His236, Cys323, Cys326, Cys341, Cys344, Cys370, Cys373, His382, and Cys416. The interval 200–236 (CIKDLLARAGKSMCTLSEQLDYIESKRGVYCCRDHGH) is C2H2. Positions 323–344 (CNHCDEVSWQTCDFLKATCEQC) are C4. Residues 370–416 (CPACQDPEIGPEHSAADYHNHSNIETRLRKGGRTRCFGGCVFAYVGC) form a C2HC region. A CoV Nsp2 middle domain is found at 458–688 (RVNINIVGDF…VDVVNKALEM (231 aa)). Residues 690 to 818 (IDQVTIAGAK…TNNVFRLKGG (129 aa)) enclose the CoV Nsp2 C-terminal domain. Residues 822 to 930 (KGVTFGEDTV…MYCSFYPPDE (109 aa)) form the Ubiquitin-like 1 domain. Macro domains are found at residues 1001–1167 (VNQL…MDYL), 1205–1333 (KIKA…LPSE), and 1341–1468 (ILGT…TSSS). The DPUP domain occupies 1470–1536 (TSEDHFVETV…PLDKLKSLLS (67 aa)). The Ubiquitin-like 2 domain occupies 1540-1595 (VKTIKVFTTVDNTNLHTQLVDMSMTYGQQLGPTYLEGADVTKIKPHVNHEGKTFFV). In terms of domain architecture, Peptidase C16 spans 1609–1873 (YYHTLDESFL…YTEIEPKLDG (265 aa)). Cys1649 (for PL-PRO activity) is an active-site residue. Residues Cys1727, Cys1730, Cys1762, and Cys1764 each coordinate Zn(2+). The C4-type zinc-finger motif lies at 1727-1764 (CKHCGQKTTTLTGVEAVMYMGTLSYDNLKMGVSIPCVC). Active-site for PL-PRO activity residues include His1810 and Asp1824. Positions 1886-1996 (PIDLIPTQPL…CLWSTKPVDT (111 aa)) constitute a Nucleic acid-binding domain. The region spanning 2021–2130 (PTPEEVVENP…LGQAAVTTSN (110 aa)) is the G2M domain. Residues 2201–2221 (LFTIAMWLLLLSICLGSLIYV) traverse the membrane as a helical segment. The tract at residues 2201–2369 (LFTIAMWLLL…IFFASFYYIW (169 aa)) is HD1. Residues 2222-2292 (TAALGVLLSN…QVTISSYKLD (71 aa)) enclose the 3Ecto domain. 2 disulfide bridges follow: Cys2238–Cys2266 and Cys2257–Cys2263. Helical transmembrane passes span 2312–2334 (FFYLLGLSAIMQVFFGYFASHFI) and 2349–2369 (MAPVSAMVRMYIFFASFYYIW). The segment at 2370 to 2460 (KSYVHIMDGC…QFKRPINPTD (91 aa)) is Y1. In terms of domain architecture, CoV Nsp3 Y spans 2370–2738 (KSYVHIMDGC…ITTKISLKGG (369 aa)). His2374, Cys2379, Cys2384, Cys2387, Cys2420, His2423, Cys2427, and Cys2430 together coordinate Zn(2+). A ZF1 region spans residues 2374-2387 (HIMDGCTSSTCMMC). The interval 2420–2430 (CKTHNWNCLNC) is ZF2. Positions 2461 to 2555 (QSSYVVDSVA…LLDQALVSDV (95 aa)) are Y2. Residues 2461–2738 (QSSYVVDSVA…ITTKISLKGG (278 aa)) are coV-Y. The interval 2556 to 2637 (GDSTEVSVKM…ECLKLSHHSD (82 aa)) is Y3. The segment at 2638 to 2738 (LEVTGDSCNN…ITTKISLKGG (101 aa)) is Y4. 6 helical membrane-spanning segments follow: residues 2753–2773 (LLCVLAALVCYIVMPVHILSV), 3020–3040 (ASVVAGGIIAILVTCAAYYFM), 3059–3079 (LFLMSFTILCLAPAYSFLPGV), 3081–3101 (SVFYLYLTFYFTNDVSFLAHL), 3103–3123 (WFAMFSPIVPFWITAIYVFCI), and 3140–3160 (VVFNGVTFSTFEEAALCTFLL). The HD2 stretch occupies residues 2753 to 3160 (LLCVLAALVC…EEAALCTFLL (408 aa)). A Nsp4C domain is found at 3140–3238 (VVFNGVTFST…QTSITSAVLQ (99 aa)). The region spanning 3239–3544 (SGFRKMAFPS…VRQCSGVTFQ (306 aa)) is the Peptidase C30 domain. Residues His3279 and Cys3383 each act as for 3CL-PRO activity in the active site. The next 7 membrane-spanning stretches (helical) occupy residues 3562 to 3582 (FLTSLLILVQSTQWSLFFFVY), 3584 to 3604 (NAFLPFTLGIMAVAACAMLLV), 3610 to 3630 (FLCLFLLPSLATVAYFNMVYM), 3657 to 3676 (CVMYASALVLLVLMTARTVY), 3683 to 3702 (VWTLMNVITLVYKVYYGNAL), 3726 to 3746 (IMFLARAIVFVCVEYYPLLFI), and 3754 to 3774 (IMLVYCFLGYCCCCYFGLFCL). The segment at 3562-3774 (FLTSLLILVQ…CCCYFGLFCL (213 aa)) is HD3. Residues 3835 to 3917 (SKMSDVKCTS…EMLDNRATLQ (83 aa)) enclose the RdRp Nsp7 cofactor domain. The 198-residue stretch at 3918–4115 (AIASEFSSLP…LRANSAVKLQ (198 aa)) folds into the RdRp Nsp8 cofactor domain. The region spanning 4116-4228 (NNELSPVALR…GSLAATVRLQ (113 aa)) is the Nsp9 ssRNA-binding domain. Residues 4229–4367 (AGNATEVPAN…CDQLREPMMQ (139 aa)) form the ExoN/MTase coactivator domain. Positions 4302, 4305, 4311, 4318, 4345, 4348, 4356, and 4358 each coordinate Zn(2+). 2 zinc fingers span residues 4302 to 4318 (CLYCRCHIDHPNPKGFC) and 4345 to 4358 (CTVCGMWKGYGCSC). Residues 4374–4628 (FLNRVCGVSA…AAESHMDADL (255 aa)) enclose the NiRAN domain. Residues Asn4576 and Asp4585 each coordinate Mn(2+). The Nsp12 Interface domain occupies 4633–4731 (IKWDLLKYDF…HNQDVNLHSS (99 aa)). Positions 4662, 4668, 4673, 4677, and 4854 each coordinate Zn(2+). The Nsp12 RNA-dependent RNA polymerase domain occupies 4732-5299 (RLSFKELLVY…AMYTPHTVLQ (568 aa)). A rdRp Fingers N-ter region spans residues 4734 to 4948 (SFKELLVYAA…HQKLLKSIAA (215 aa)). The interval 4949–4987 (TRGATVVIGTSKFYGGWHNMLKTVYSDVETPHLMGWDYP) is rdRp Palm N-ter. One can recognise a RdRp catalytic domain in the interval 4979-5141 (PHLMGWDYPK…CYNSNYAAQG (163 aa)). Residues 4988 to 5046 (KCDRAMPNMLRIMASLVLARKHSTCCNLSHRFYRLANECAQVLSEMVMCGGSLYVKPGG) form a rdRp Fingers C-ter region. Positions 5009, 5012, and 5013 each coordinate Zn(2+). The segment at 5047 to 5182 (TSSGDATTAY…TKGPHEFCSQ (136 aa)) is rdRp Palm C-ter. Catalysis depends on residues Ser5126, Asp5127, and Asp5128. The segment at 5183 to 5299 (HTMLVKQGDD…AMYTPHTVLQ (117 aa)) is rdRp Thumb. Positions 5300–5412 (AVGACVLCNS…TDFNAIATCD (113 aa)) constitute a CV ZBD domain. 12 residues coordinate Zn(2+): Cys5304, Cys5307, Cys5315, Cys5318, Cys5325, Cys5328, His5332, His5338, Cys5349, Cys5354, Cys5371, and His5374. Residues 5556–5737 (NISDEFSSNV…MKTIGPDMFL (182 aa)) form the (+)RNA virus helicase ATP-binding domain. Residue 5581–5588 (GPPGTGKS) coordinates ATP. The (+)RNA virus helicase C-terminal domain occupies 5738–5907 (GTCRRCPAEI…TLQAENVTGL (170 aa)). One can recognise an ExoN domain in the interval 5972-6187 (MFITREEAIR…RCLAVHECFV (216 aa)). Catalysis depends on residues Asp5990, Glu5992, and Glu6091. Zn(2+) contacts are provided by Cys6107, Cys6110, Cys6126, His6129, His6157, Cys6161, and His6164. Catalysis depends on residues His6168 and Asp6173. Cys6179 is a binding site for Zn(2+). The N7-MTase domain occupies 6196 to 6427 (YPIIGDELKI…NLWNTFTRLQ (232 aa)). 6231-6237 (DIGNPKA) is an S-adenosyl-L-methionine binding site. The segment at 6314-6328 (CDGGSLYVNKHAFHT) is gpppA-binding. Positions 6352, 6373, 6384, and 6387 each coordinate Zn(2+). The Nsp15 N-terminal oligomerization domain occupies 6428–6488 (SLENVAYNVV…NVAFELWAKR (61 aa)). The AV-Nsp11N/CoV-Nsp15M domain occupies 6489 to 6614 (NIKSVPEIKI…YFKKVDGIIQ (126 aa)). The region spanning 6631–6770 (KPRSQMETDF…KDGHVETFYP (140 aa)) is the NendoU domain. Residues His6661, His6676, Lys6716, Lys6819, Asp6903, Lys6943, and Glu6976 contribute to the active site. Residues 6775–7069 (SQAWQPGVAM…RVVVSSDILV (295 aa)) enclose the Nidovirus-type SAM-dependent 2'-O-MTase domain.

This sequence belongs to the coronaviruses polyprotein 1ab family. As to quaternary structure, interacts with host PHB and PHB2. Interacts with papain-like protease nsp3 and non-structural protein 6. In terms of assembly, monomer. Homodimer. Only the homodimer shows catalytic activity. As to quaternary structure, interacts with nsp8 and nsp12 to form the replication-transcription complex (RTC): nsp12, nsp7, two subunits of nsp8, and up to two subunits of nsp13. Interacts with nsp7, nsp13 and nsp12 to form the replication-transcription complex (RTC): nsp12, nsp7, two subunits of nsp8, and up to two subunits of nsp13. In terms of assembly, interacts with nsp12. As to quaternary structure, interacts with proofreading exoribonuclease nsp14 and 2'-O-methyltransferase nsp16; these interactions enhance nsp14 and nsp16 enzymatic activities. Interacts with nsp7 and nsp8 to form the replication-transcription complex (RTC): nsp12, nsp7, two subunits of nsp8, and up to two subunits of nsp13. Interacts with nsp9. In terms of assembly, interacts with nsp8 to form the replication-transcription complex (RTC): nsp12, nsp7, two subunits of nsp8, and up to two subunits of nsp13. Mn(2+) serves as cofactor. Mg(2+) is required as a cofactor. Specific enzymatic cleavages in vivo by its own proteases yield mature proteins. 3CL-PRO and PL-PRO proteinases are autocatalytically processed.

Its subcellular location is the host membrane. It localises to the host cytoplasm. The protein localises to the host perinuclear region. The protein resides in the host endoplasmic reticulum-Golgi intermediate compartment. It carries out the reaction RNA(n) + a ribonucleoside 5'-triphosphate = RNA(n+1) + diphosphate. The enzyme catalyses ATP + H2O = ADP + phosphate + H(+). It catalyses the reaction Thiol-dependent hydrolysis of ester, thioester, amide, peptide and isopeptide bonds formed by the C-terminal Gly of ubiquitin (a 76-residue protein attached to proteins as an intracellular targeting signal).. The catalysed reaction is a 5'-end (N(7)-methyl 5'-triphosphoguanosine)-ribonucleoside in mRNA + S-adenosyl-L-methionine = a 5'-end (N(7)-methyl 5'-triphosphoguanosine)-(2'-O-methyl-ribonucleoside) in mRNA + S-adenosyl-L-homocysteine + H(+). It carries out the reaction uridylyl-uridylyl-ribonucleotide-RNA = a 3'-end uridylyl-2',3'-cyclophospho-uridine-RNA + a 5'-end dephospho-ribonucleoside-RNA. The enzyme catalyses a 5'-end diphospho-ribonucleoside in mRNA + GTP + H(+) = a 5'-end (5'-triphosphoguanosine)-ribonucleoside in mRNA + diphosphate. It catalyses the reaction a 5'-end (5'-triphosphoguanosine)-ribonucleoside in mRNA + S-adenosyl-L-methionine = a 5'-end (N(7)-methyl 5'-triphosphoguanosine)-ribonucleoside in mRNA + S-adenosyl-L-homocysteine. Functionally, the replicase polyprotein of coronaviruses is a multifunctional protein: it contains the activities necessary for the transcription of negative stranded RNA, leader RNA, subgenomic mRNAs and progeny virion RNA as well as proteinases responsible for the cleavage of the polyprotein into functional products. Its function is as follows. Inhibits host translation by interacting with the 40S ribosomal subunit. The nsp1-40S ribosome complex further induces an endonucleolytic cleavage near the 5'UTR of host mRNAs, targeting them for degradation. Viral mRNAs are not susceptible to nsp1-mediated endonucleolytic RNA cleavage thanks to the presence of a 5'-end leader sequence and are therefore protected from degradation. By suppressing host gene expression, nsp1 facilitates efficient viral gene expression in infected cells and evasion from host immune response. May play a role in the modulation of host cell survival signaling pathway by interacting with host PHB and PHB2. Indeed, these two proteins play a role in maintaining the functional integrity of the mitochondria and protecting cells from various stresses. In terms of biological role, responsible for the cleavages located at the N-terminus of the replicase polyprotein. In addition, PL-PRO possesses a deubiquitinating/deISGylating activity and processes both 'Lys-48'- and 'Lys-63'-linked polyubiquitin chains from cellular substrates. Participates together with nsp4 in the assembly of virally-induced cytoplasmic double-membrane vesicles necessary for viral replication. Antagonizes innate immune induction of type I interferon by blocking the phosphorylation, dimerization and subsequent nuclear translocation of host IRF3. Also prevents host NF-kappa-B signaling. Functionally, participates in the assembly of virally-induced cytoplasmic double-membrane vesicles necessary for viral replication. Its function is as follows. Cleaves the C-terminus of replicase polyprotein at 11 sites. Recognizes substrates containing the core sequence [ILMVF]-Q-|-[SGACN]. Also able to bind an ADP-ribose-1''-phosphate (ADRP). Plays a role in the initial induction of autophagosomes from host endoplasmic reticulum. Later, limits the expansion of these phagosomes that are no longer able to deliver viral components to lysosomes. In terms of biological role, forms a hexadecamer with nsp8 (8 subunits of each) that may participate in viral replication by acting as a primase. Alternatively, may synthesize substantially longer products than oligonucleotide primers. Functionally, forms a hexadecamer with nsp7 (8 subunits of each) that may participate in viral replication by acting as a primase. Alternatively, may synthesize substantially longer products than oligonucleotide primers. Its function is as follows. Forms a primer, NSP9-pU, which is utilized by the polymerase for the initiation of RNA chains. Interacts with ribosome signal recognition particle RNA (SRP). Together with NSP8, suppress protein integration into the cell membrane, thereby disrupting host immune defenses. Plays a pivotal role in viral transcription by stimulating both nsp14 3'-5' exoribonuclease and nsp16 2'-O-methyltransferase activities. Therefore plays an essential role in viral mRNAs cap methylation. In terms of biological role, RNA-directed RNA polymerase that catalyzes the transcription of viral genomic and subgenomic RNAs. Acts in complex with nsp7 and nsp8 to transcribe both the minus and positive strands of genomic RNA. The kinase-like NiRAN domain of NSP12 attaches one or more nucleotides to the amino terminus of NSP9, forming a covalent RNA-protein intermediate that serves as transcription/replication primer. Subgenomic RNAs (sgRNAs) are formed by discontinuous transcription: The polymerase has the ability to pause at transcription-regulating sequences (TRS) and jump to the leader TRS, resulting in a major deletion. This creates a series of subgenomic RNAs that are replicated, transcribed and translated. In addition, Nsp12 is a subunit of the viral RNA capping enzyme that catalyzes the RNA guanylyltransferase reaction for genomic and sub-genomic RNAs. Subsequently, the NiRAN domain transfers RNA to GDP, and forms the core cap structure GpppA-RNA. Functionally, multi-functional protein with a zinc-binding domain in N-terminus displaying RNA and DNA duplex-unwinding activities with 5' to 3' polarity. Activity of helicase is dependent on magnesium. Its function is as follows. Plays a role in viral RNA synthesis through two distinct activities. The N7-guanine methyltransferase activity plays a role in the formation of the cap structure GpppA-RNA. The proofreading exoribonuclease reduces the sensitivity of the virus to RNA mutagens during replication. This activity acts on both ssRNA and dsRNA in a 3'-5' direction. Plays a role in viral transcription/replication and prevents the simultaneous activation of host cell dsRNA sensors, such as MDA5/IFIH1, OAS, and PKR. Acts by degrading the 5'-polyuridines generated during replication of the poly(A) region of viral genomic and subgenomic RNAs. Catalyzes a two-step reaction in which a 2'3'-cyclic phosphate (2'3'-cP) is first generated by 2'-O transesterification, which is then hydrolyzed to a 3'-phosphate (3'-P). If not degraded, poly(U) RNA would hybridize with poly(A) RNA tails and activate host dsRNA sensors. In terms of biological role, methyltransferase that mediates mRNA cap 2'-O-ribose methylation to the 5'-cap structure of viral mRNAs. N7-methyl guanosine cap is a prerequisite for binding of nsp16. Therefore plays an essential role in viral mRNAs cap methylation which is essential to evade immune system. This Rhinolophus ferrumequinum (Greater horseshoe bat) protein is Replicase polyprotein 1ab (rep).